Here is a 230-residue protein sequence, read N- to C-terminus: uncharacterized protein (230 aa).

The helical transmembrane segment at 7 to 23 (LFTASILSLGYLVFICG) threads the bilayer. The segment at 27–230 (KPKPTASTES…VKTEGTLKKN (204 aa)) is disordered. Low complexity predominate over residues 50–59 (AVPQKPAAPA). A compositionally biased stretch (basic and acidic residues) spans 60-83 (AEEKAPVDPKDPKSKDVDEAKKPD). Residues 101–112 (KKSKKSEKSKKK) show a composition bias toward basic residues. Positions 113–173 (KTEEKVMSED…KEKSKDETVP (61 aa)) are enriched in basic and acidic residues. Residues 199 to 210 (ETDEFPTIDEDA) are compositionally biased toward acidic residues. Positions 211 to 230 (EKTKKTEKKDVKTEGTLKKN) are enriched in basic and acidic residues.

Its subcellular location is the membrane. This is an uncharacterized protein from Caenorhabditis elegans.